A 620-amino-acid chain; its full sequence is Leucine-rich repeat and immunoglobulin-like domain-containing nogo receptor-interacting protein 1 (620 aa).

An N-terminal signal peptide occupies residues 1 to 41 (MQVSKRMLAGGVRSMPSPLLACWQPILLLVLGSVLSGSATG). 2 cysteine pairs are disulfide-bonded: C42-C48 and C46-C57. An LRRNT domain is found at 42–71 (CPPRCECSAQDRAVLCHRKRFVAVPEGIPT). Residues 42–561 (CPPRCECSAQ…FDIKTLIIAT (520 aa)) are Extracellular-facing. 11 LRR repeats span residues 72–93 (ETRL…EFAS), 96–117 (HLEE…AFNN), 120–141 (NLRT…VFTG), 144–165 (NLTK…MFQD), 168–189 (NLKS…AFSG), 192–213 (SLEQ…ALSH), 216–237 (GLIV…SFKR), 264–285 (NLTS…AVRH), 288–309 (YLRF…MLHE), 312–333 (RLQE…AFRG), and 336–357 (YLRV…VFHS). N-linked (GlcNAc...) asparagine glycosylation occurs at N144. N-linked (GlcNAc...) asparagine glycosylation is present at N202. N264, N274, and N293 each carry an N-linked (GlcNAc...) asparagine glycan. N-linked (GlcNAc...) asparagine glycosylation is present at N341. Residues 369-423 (NPLACDCRLLWVFRRRWRLNFNRQQPTCATPEFVQGKEFKDFPDVLLPNYFTCRR) enclose the LRRCT domain. 3 disulfides stabilise this stretch: C373–C396, C375–C421, and C446–C497. One can recognise an Ig-like C2-type domain in the interval 411 to 513 (PDVLLPNYFT…GNDSMPAHLH (103 aa)). 4 N-linked (GlcNAc...) asparagine glycosylation sites follow: N492, N505, N526, and N542. The helical transmembrane segment at 562-582 (TMGFISFLGVVLFCLVLLFLW) threads the bilayer. The Cytoplasmic portion of the chain corresponds to 583–620 (SRGKGNTKHNIEIEYVPRKSDAGISSADAPRKFNMKMI). At S602 the chain carries Phosphoserine.

In terms of assembly, homotetramer. Forms a ternary complex with RTN4R/NGFR and RTN4R/TNFRSF19. Interacts with NGRF and MYT1L. Interacts with RTN4R. N-glycosylated. Contains predominantly high-mannose glycans. In terms of tissue distribution, expressed exclusively in the central nervous system. Highest level in the in amygdala, hippocampus, thalamus and cerebral cortex. In the rest of the brain a basal expression seems to be always present. Up-regulated in substantia nigra neurons from Parkinson disease patients.

The protein resides in the cell membrane. Its function is as follows. Functional component of the Nogo receptor signaling complex (RTN4R/NGFR) in RhoA activation responsible for some inhibition of axonal regeneration by myelin-associated factors. Is also an important negative regulator of oligodentrocyte differentiation and axonal myelination. Acts in conjunction with RTN4 and RTN4R in regulating neuronal precursor cell motility during cortical development. The chain is Leucine-rich repeat and immunoglobulin-like domain-containing nogo receptor-interacting protein 1 (LINGO1) from Homo sapiens (Human).